Reading from the N-terminus, the 83-residue chain is Cytochrome b559 subunit alpha (83 aa).

Residues 21–35 (VIHSITIPSLFVAGW) form a helical membrane-spanning segment. Heme is bound at residue His-23.

It belongs to the PsbE/PsbF family. In terms of assembly, heterodimer of an alpha subunit and a beta subunit. PSII is composed of 1 copy each of membrane proteins PsbA, PsbB, PsbC, PsbD, PsbE, PsbF, PsbH, PsbI, PsbJ, PsbK, PsbL, PsbM, PsbT, PsbX, PsbY, PsbZ, Psb30/Ycf12, at least 3 peripheral proteins of the oxygen-evolving complex and a large number of cofactors. It forms dimeric complexes. Heme b serves as cofactor.

The protein resides in the plastid. The protein localises to the chloroplast thylakoid membrane. Functionally, this b-type cytochrome is tightly associated with the reaction center of photosystem II (PSII). PSII is a light-driven water:plastoquinone oxidoreductase that uses light energy to abstract electrons from H(2)O, generating O(2) and a proton gradient subsequently used for ATP formation. It consists of a core antenna complex that captures photons, and an electron transfer chain that converts photonic excitation into a charge separation. The polypeptide is Cytochrome b559 subunit alpha (Nephroselmis olivacea (Green alga)).